Here is a 401-residue protein sequence, read N- to C-terminus: Chalcone synthase 4 (401 aa).

C168 is an active-site residue.

Belongs to the thiolase-like superfamily. Chalcone/stilbene synthases family.

The enzyme catalyses (E)-4-coumaroyl-CoA + 3 malonyl-CoA + 3 H(+) = 2',4,4',6'-tetrahydroxychalcone + 3 CO2 + 4 CoA. Its pathway is secondary metabolite biosynthesis; flavonoid biosynthesis. In terms of biological role, the primary product of this enzyme is 4,2',4',6'-tetrahydroxychalcone (also termed naringenin-chalcone or chalcone) which can under specific conditions spontaneously isomerize into naringenin. This is Chalcone synthase 4 (CHS4) from Sorghum bicolor (Sorghum).